A 312-amino-acid polypeptide reads, in one-letter code: Ribosomal RNA small subunit methyltransferase H (312 aa).

S-adenosyl-L-methionine is bound by residues 32-34, Asp51, Phe78, Asp99, and Gln106; that span reads AGH.

The protein belongs to the methyltransferase superfamily. RsmH family.

Its subcellular location is the cytoplasm. It carries out the reaction cytidine(1402) in 16S rRNA + S-adenosyl-L-methionine = N(4)-methylcytidine(1402) in 16S rRNA + S-adenosyl-L-homocysteine + H(+). Its function is as follows. Specifically methylates the N4 position of cytidine in position 1402 (C1402) of 16S rRNA. The polypeptide is Ribosomal RNA small subunit methyltransferase H (Exiguobacterium sibiricum (strain DSM 17290 / CCUG 55495 / CIP 109462 / JCM 13490 / 255-15)).